The chain runs to 372 residues: MIFPRKCQSTQRDLWNIFKLWGWTMLCCDFLAHHGTDCWTYHYSENPMNWQKARRFCRENYTDLVAIQNKAEIEYLEKTLPFSPSYYWIGIRKIGGIWTWVGTNKSLTQEAENWGDGEPNNKKNKEDCVEIYIKRKKDAGKWNDDACHKPKAALCYTASCQPWSCSGHGECVEIINNYTCNCDVGYYGPQCQFVIQCEPLEPPKLGTMDCTHPLGDFSFSSQCAFNCSEGTNLTGIEETTCGPFGNWSSPEPTCQVIQCEPLSAPDLGIMNCSHPLASFSFSSACTFSCSEGTELIGEKKTICESSGIWSNPNPICQKLDRSFSMIKEGDYNPLFIPVAVMVTAFSGLAFIIWLARRLKKGKKSKKSMDDPY.

A signal peptide spans 1–28; that stretch reads MIFPRKCQSTQRDLWNIFKLWGWTMLCC. Residues 29–38 constitute a propeptide that is removed on maturation; sequence DFLAHHGTDC. At 39–332 the chain is on the extracellular side; sequence WTYHYSENPM…FSMIKEGDYN (294 aa). Residues 55–155 enclose the C-type lectin domain; that stretch reads RFCRENYTDL…ACHKPKAALC (101 aa). 10 disulfides stabilise this stretch: Cys-57–Cys-155, Cys-128–Cys-147, Cys-128–Cys-160, Cys-160–Cys-171, Cys-165–Cys-180, Cys-182–Cys-191, Cys-197–Cys-241, Cys-227–Cys-254, Cys-259–Cys-303, and Cys-289–Cys-316. 2 N-linked (GlcNAc...) asparagine glycosylation sites follow: Asn-60 and Asn-104. Glu-118, Asn-120, Glu-126, Asn-143, and Asp-144 together coordinate Ca(2+). The EGF-like domain occupies 156-192; sequence YTASCQPWSCSGHGECVEIINNYTCNCDVGYYGPQCQ. N-linked (GlcNAc...) asparagine glycosylation occurs at Asn-177. 2 consecutive Sushi domains span residues 195–256 and 257–318; these read IQCE…TCQV and IQCE…ICQK. 4 N-linked (GlcNAc...) asparagine glycosylation sites follow: Asn-226, Asn-232, Asn-246, and Asn-271. Residues 333-355 form a helical membrane-spanning segment; that stretch reads PLFIPVAVMVTAFSGLAFIIWLA. The Cytoplasmic portion of the chain corresponds to 356–372; that stretch reads RRLKKGKKSKKSMDDPY.

This sequence belongs to the selectin/LECAM family. In terms of assembly, interaction with SELPLG/PSGL1 and PODXL2 is required for promoting recruitment and rolling of leukocytes. This interaction is dependent on the sialyl Lewis X glycan modification of SELPLG and PODXL2, and tyrosine sulfation modifications of SELPLG. Sulfation on 'Tyr-51' of SELPLG is important for L-selectin binding. N-glycosylated.

Its subcellular location is the cell membrane. In terms of biological role, calcium-dependent lectin that mediates cell adhesion by binding to glycoproteins on neighboring cells. Mediates the adherence of lymphocytes to endothelial cells of high endothelial venules in peripheral lymph nodes. Promotes initial tethering and rolling of leukocytes in endothelia. This chain is L-selectin (SELL), found in Macaca mulatta (Rhesus macaque).